We begin with the raw amino-acid sequence, 423 residues long: MTESVLDYMTRLGRAARQASRVIARASTAQKNRALQAAADALDAARAELAAANEQDLAAGRANGLEPALLDRLALTPARIDGMITGLRQVASLPDPVGAIRDMSYRPSGIQVGKMRVPLGVIGIIYESRPNVTIDAASLCLKSGNATILRGGSEAIHSNRAIATCIQRGLAEAGLPAAVVQVVETTDREAVGALISMPEFVDVIVPRGGRGLIERISRDARVPVIKHLDGICHVYVAEHADLDKGWRVAFNAKTYRYGICGAMETLLVDQRVAEGFLPEMARRFQEKGVELRGCERTRALIEAKPASEDDWHTEYLDAILSIRVVDGLDQAIEHINHYGSHHTDSIITEHQGQARQFMAEVDSASVMLNTPTCFADGFEYGLGAEIGISTDKLHARGPVGLEGLTCEKYVVIGDGQLRGQESC.

Belongs to the gamma-glutamyl phosphate reductase family.

It is found in the cytoplasm. It catalyses the reaction L-glutamate 5-semialdehyde + phosphate + NADP(+) = L-glutamyl 5-phosphate + NADPH + H(+). The protein operates within amino-acid biosynthesis; L-proline biosynthesis; L-glutamate 5-semialdehyde from L-glutamate: step 2/2. Its function is as follows. Catalyzes the NADPH-dependent reduction of L-glutamate 5-phosphate into L-glutamate 5-semialdehyde and phosphate. The product spontaneously undergoes cyclization to form 1-pyrroline-5-carboxylate. This Pseudomonas putida (strain W619) protein is Gamma-glutamyl phosphate reductase.